We begin with the raw amino-acid sequence, 247 residues long: Nodulation protein H (247 aa).

The tract at residues 1-16 is hydrophobic; sequence MTHSTLPPRPFAILAM.

Required for the formation of sulfated nod factor. Proposed to transfer activated sulfate (PAPS) to a N-acetylglucosamine of the nod factor. The chain is Nodulation protein H (nodH) from Rhizobium meliloti (Ensifer meliloti).